The chain runs to 271 residues: Tryptophan synthase alpha chain (271 aa).

Catalysis depends on proton acceptor residues E53 and D64.

This sequence belongs to the TrpA family. As to quaternary structure, tetramer of two alpha and two beta chains.

It carries out the reaction (1S,2R)-1-C-(indol-3-yl)glycerol 3-phosphate + L-serine = D-glyceraldehyde 3-phosphate + L-tryptophan + H2O. Its pathway is amino-acid biosynthesis; L-tryptophan biosynthesis; L-tryptophan from chorismate: step 5/5. In terms of biological role, the alpha subunit is responsible for the aldol cleavage of indoleglycerol phosphate to indole and glyceraldehyde 3-phosphate. The polypeptide is Tryptophan synthase alpha chain (Streptomyces coelicolor (strain ATCC BAA-471 / A3(2) / M145)).